The following is a 484-amino-acid chain: Protein nucleotidyltransferase YdiU (484 aa).

Residues Gly81, Gly83, Arg84, Lys103, Asp115, Gly116, Arg166, and Arg173 each contribute to the ATP site. Asp244 acts as the Proton acceptor in catalysis. 2 residues coordinate Mg(2+): Asn245 and Asp254. Asp254 provides a ligand contact to ATP.

It belongs to the SELO family. The cofactor is Mg(2+). Requires Mn(2+) as cofactor.

It catalyses the reaction L-seryl-[protein] + ATP = 3-O-(5'-adenylyl)-L-seryl-[protein] + diphosphate. The catalysed reaction is L-threonyl-[protein] + ATP = 3-O-(5'-adenylyl)-L-threonyl-[protein] + diphosphate. The enzyme catalyses L-tyrosyl-[protein] + ATP = O-(5'-adenylyl)-L-tyrosyl-[protein] + diphosphate. It carries out the reaction L-histidyl-[protein] + UTP = N(tele)-(5'-uridylyl)-L-histidyl-[protein] + diphosphate. It catalyses the reaction L-seryl-[protein] + UTP = O-(5'-uridylyl)-L-seryl-[protein] + diphosphate. The catalysed reaction is L-tyrosyl-[protein] + UTP = O-(5'-uridylyl)-L-tyrosyl-[protein] + diphosphate. Nucleotidyltransferase involved in the post-translational modification of proteins. It can catalyze the addition of adenosine monophosphate (AMP) or uridine monophosphate (UMP) to a protein, resulting in modifications known as AMPylation and UMPylation. This Shewanella baltica (strain OS185) protein is Protein nucleotidyltransferase YdiU.